The sequence spans 2193 residues: ATP-dependent helicase BRM (2193 aa).

Residue Met-1 is modified to N-acetylmethionine. A compositionally biased stretch (gly residues) spans 1–10; the sequence is MQSGGSGGGP. 5 disordered regions span residues 1-126, 175-231, 293-466, 511-558, and 580-649; these read MQSG…QEGQ, MQDL…PGNM, QKAG…GFTK, SPAI…DNVG, and TSTD…ASAR. The segment covering 23 to 62 has biased composition (low complexity); the sequence is ASTSSAASPSSSSSSVQQQQQQQQQQQQQQQLASRQQQQQ. A coiled-coil region spans residues 38-58; the sequence is VQQQQQQQQQQQQQQQLASRQ. Gly residues predominate over residues 79-88; it reads GVQGMMGGGN. Low complexity-rich tracts occupy residues 91–102, 110–126, and 180–192; these read SSPGSMQMPQQS, QQQQQQQQQGSSTQEGQ, and PSSQPQASSSKPS. Residues 204 to 223 show a composition bias toward polar residues; the sequence is ESSSQQRNETKSHPQQQVGT. Over residues 301 to 320 the composition is skewed to low complexity; that stretch reads ASQSPSIPISSQPASSSVVP. Composition is skewed to polar residues over residues 325–339, 347–358, 383–412, and 421–433; these read PHANSASDISGQSGS, STGSFASTSSPR, QPTNGMPSGNPLQTSANETPVLDQNASTKK, and QMQQPRQLNTPTP. Residues 445–463 show a composition bias toward low complexity; it reads SNSSLQSGQGTQQAQQRSG. One can recognise a QLQ domain in the interval 463–499; sequence GFTKQQLHVLKAQILAFRRLKKGEGSLPPELLQAISP. Composition is skewed to basic and acidic residues over residues 517-537 and 611-621; these read VQDRSSDKTGEDQARSLECGK and PRSDSTADKGK. Residues 626-638 are compositionally biased toward polar residues; the sequence is DGSQSKVPPQANS. A Nuclear localization signal 1 motif is present at residues 705-712; the sequence is LKKINGLL. The stretch at 726-795 forms a coiled coil; that stretch reads VLRLQIEEKK…QKAVREKQLK (70 aa). Residues 993-1158 form the Helicase ATP-binding domain; it reads LSLYNNKLNG…WSLLNLLLPD (166 aa). 1006 to 1013 serves as a coordination point for ATP; that stretch reads DEMGLGKT. A coiled-coil region spans residues 1109-1129; the sequence is DEAQRMKDRESVLARDLDRYR. Residues 1312 to 1489 enclose the Helicase C-terminal domain; sequence ILDRILIKLQ…QYKIDMADEV (178 aa). Disordered stretches follow at residues 1583–1775 and 1789–1894; these read SKKP…DEEQ and LRPR…NAGA. Basic residues predominate over residues 1608–1617; that stretch reads KRGRPKSKKI. The stretch at 1618-1638 forms a coiled coil; that stretch reads NYKEIEDDIAGYSEESSEERN. Ser-1641 bears the Phosphoserine mark. Positions 1642-1657 are enriched in acidic residues; that stretch reads GNEEEGDIRQFDDDEL. Basic and acidic residues predominate over residues 1821–1832; that stretch reads TVVDSHSSRQDQ. The segment covering 1833 to 1842 has biased composition (low complexity); that stretch reads SDSSSRLRSV. Composition is skewed to polar residues over residues 1848–1870 and 1882–1892; these read ASTSKLHVSSPKSGRLNATQLTV and DGTSPISSSNA. One can recognise a Bromo domain in the interval 1895–2005; that stretch reads RMSHIIQKRC…NLFFDLLKMS (111 aa). A Nuclear localization signal 2 motif is present at residues 1901–1908; sequence QKRCKIVI. The span at 2022-2032 shows a compositional bias: polar residues; that stretch reads GSAPTLVSTPT. The segment at 2022 to 2193 is disordered; the sequence is GSAPTLVSTP…DSGKRRPSHL (172 aa). Phosphoserine is present on Ser-2137. The segment covering 2149–2166 has biased composition (polar residues); that stretch reads LAQQQRWPNQPTHPNNSG.

Belongs to the SNF2/RAD54 helicase family. In terms of assembly, interacts with SWI3B, SWI3C, H3 and H4, but not with SWI3A, SWI3D or BSH. Interacts with LFY. Interacts with REF6. Binds to FGT1. In terms of tissue distribution, highly expressed in inflorescences and leaves. Low expression in siliques, roots and seedlings. Detected in shoot apical meristem, root meristem, vascular tissue of developing leaves, petals, stamens filaments, anthers and carpels.

It is found in the nucleus. It catalyses the reaction ATP + H2O = ADP + phosphate + H(+). Functionally, ATPase subunit of a multiprotein complex equivalent of the SWI/SNF complex that acts by remodeling the chromatin by catalyzing an ATP-dependent alteration in the structure of nucleosomal DNA. Represses embryonic genes in leaves and controls shoot development and flowering. Activates flower homeotic genes. The association of BRM with its target genes requires REF6. Necessary to acquire heat stress (HS) memory, by globally binding to HS memory genes. The polypeptide is ATP-dependent helicase BRM (Arabidopsis thaliana (Mouse-ear cress)).